A 146-amino-acid polypeptide reads, in one-letter code: Hemoglobin subunit beta (146 aa).

V1 bears the N-acetylvaline mark. Residues H2–H146 enclose the Globin domain. Residue T12 is modified to Phosphothreonine. S44 is subject to Phosphoserine. K59 is modified (N6-acetyllysine). H63 is a heme b binding site. K82 bears the N6-acetyllysine mark. Residue H92 coordinates heme b. At C93 the chain carries S-nitrosocysteine. An N6-acetyllysine modification is found at K144.

The protein belongs to the globin family. Heterotetramer of two alpha chains and two beta chains. Red blood cells.

Involved in oxygen transport from the lung to the various peripheral tissues. The protein is Hemoglobin subunit beta (HBB) of Cephalopachus bancanus (Western tarsier).